Reading from the N-terminus, the 144-residue chain is Aklanonic acid methyl ester cyclase AcmA (144 aa).

Positions 51 and 105 each coordinate substrate.

This sequence belongs to the polyketide cyclase DnrD family. Homotetramer.

It catalyses the reaction methyl aklanonate = aklaviketone. Its pathway is antibiotic biosynthesis; daunorubicin biosynthesis. The protein operates within antibiotic biosynthesis; carminomycin biosynthesis. It functions in the pathway antibiotic biosynthesis; rhodomycin biosynthesis. It participates in antibiotic biosynthesis; aclacinomycin biosynthesis. In terms of biological role, involved in the biosynthesis of aklavinone which is an important precursor common to the formation of the clinically significant anthracyclines such as carminomycin, daunorubicin (daunomycin), rhodomycin, aclacinomycin T (aklavin) and aclacinomycin A (aclarubicin). These compounds are aromatic polyketide antibiotics that exhibit high cytotoxicity and are widely applied in the chemotherapy of a variety of cancers. Catalyzes the cyclization of aklanonic acid methyl ester to yield aklaviketone. It is also able to use nogalonic acid methyl ester as substrate, but produces exclusively auraviketone with C9-R stereochemistry. The protein is Aklanonic acid methyl ester cyclase AcmA (acma) of Streptomyces galilaeus.